The primary structure comprises 56 residues: uncharacterized protein (56 aa).

This is an uncharacterized protein from Borreliella burgdorferi (strain ATCC 35210 / DSM 4680 / CIP 102532 / B31) (Borrelia burgdorferi).